Here is a 101-residue protein sequence, read N- to C-terminus: ATP-dependent Clp protease adapter protein ClpS (101 aa).

Residues 1 to 24 (MVVASAPAKPGSVGQQESASRDAT) form a disordered region. Residues 13–23 (VGQQESASRDA) are compositionally biased toward polar residues.

Belongs to the ClpS family. In terms of assembly, binds to the N-terminal domain of the chaperone ClpA.

Its function is as follows. Involved in the modulation of the specificity of the ClpAP-mediated ATP-dependent protein degradation. The chain is ATP-dependent Clp protease adapter protein ClpS from Mycobacterium marinum (strain ATCC BAA-535 / M).